Consider the following 89-residue polypeptide: MAISKEKKNEIIAQYARHEGDTGSVEVQVAVLTWEINHLNNHIKEHKKDHATYRGLMKKIGHRRNLLAYLRRTDVNRYRELIQSLGLRR.

It belongs to the universal ribosomal protein uS15 family. Part of the 30S ribosomal subunit. Forms a bridge to the 50S subunit in the 70S ribosome, contacting the 23S rRNA.

In terms of biological role, one of the primary rRNA binding proteins, it binds directly to 16S rRNA where it helps nucleate assembly of the platform of the 30S subunit by binding and bridging several RNA helices of the 16S rRNA. Its function is as follows. Forms an intersubunit bridge (bridge B4) with the 23S rRNA of the 50S subunit in the ribosome. In Streptococcus equi subsp. zooepidemicus (strain H70), this protein is Small ribosomal subunit protein uS15.